Reading from the N-terminus, the 294-residue chain is MNRKITDKLATGMFGLCAAIIAAILVGLFSYIIINGVSQLSFQFITTKSSAIAAGGGIRDQLFNSFYILFITMLITIPLGVGGGVFMAEYAPNNKVTDFIRTCIEVLSSLPSIVIGMFGLLMFVNLTGWGYTIIGGALALTVFNLPVMVRVTEDAIRSVPKDLKEASLALGVSRWHTVKTVLIPSAIPSIITGAILASGRVFGEAAALLFTAGLTTPRLNFTEWNPFSETSPLNIFRPAETLAVHIWNVNTQGMIPDAEAIANGGSAVLVISVLVFNLAARWLGTMIYKKLTAN.

The next 6 membrane-spanning stretches (helical) occupy residues 14-34 (FGLC…YIII), 66-86 (FYIL…GGVF), 99-121 (FIRT…FGLL), 126-148 (LTGW…LPVM), 190-210 (IITG…ALLF), and 260-280 (AIAN…NLAA). The 219-residue stretch at 62–280 (LFNSFYILFI…ISVLVFNLAA (219 aa)) folds into the ABC transmembrane type-1 domain.

The protein belongs to the binding-protein-dependent transport system permease family. CysTW subfamily.

It is found in the cell membrane. Part of the binding-protein-dependent transport system YqgGHIJK. Probably responsible for the translocation of the substrate across the membrane. This is Probable ABC transporter permease protein YqgI (yqgI) from Bacillus subtilis (strain 168).